The following is a 254-amino-acid chain: L-arabinose 1-dehydrogenase (NAD(P)(+)) (254 aa).

Tyrosine 142 functions as the Proton acceptor in the catalytic mechanism. NAD(+) is bound by residues tyrosine 142 and lysine 146.

Belongs to the NAD(P)-dependent epimerase/dehydratase family. In terms of assembly, homotetramer.

The enzyme catalyses alpha-L-arabinopyanose + NAD(+) = L-arabinono-1,4-lactone + NADH + H(+). The catalysed reaction is alpha-L-arabinopyanose + NADP(+) = L-arabinono-1,4-lactone + NADPH + H(+). The protein operates within carbohydrate degradation; L-arabinose degradation via L-arabinono-1,4-lactone pathway. L-AraDH initiates the degradation of L-arabinose. Catalyzes the NAD(P)(+)-dependent conversion of L-arabinose to L-arabino-gamma-lactone. It is highly specific for L-arabinose as substrate and can use both NADP(+) and NAD(+) as electron acceptor, with a slight preference for NADP(+). This Haloferax volcanii (strain ATCC 29605 / DSM 3757 / JCM 8879 / NBRC 14742 / NCIMB 2012 / VKM B-1768 / DS2) (Halobacterium volcanii) protein is L-arabinose 1-dehydrogenase (NAD(P)(+)).